A 184-amino-acid polypeptide reads, in one-letter code: Ribosome maturation factor RimM (184 aa).

The PRC barrel domain maps to 101-180; that stretch reads DGEFFYCDLV…KITTNNAKTL (80 aa).

It belongs to the RimM family. As to quaternary structure, binds ribosomal protein uS19.

It is found in the cytoplasm. Functionally, an accessory protein needed during the final step in the assembly of 30S ribosomal subunit, possibly for assembly of the head region. Essential for efficient processing of 16S rRNA. May be needed both before and after RbfA during the maturation of 16S rRNA. It has affinity for free ribosomal 30S subunits but not for 70S ribosomes. In Helicobacter pylori (strain Shi470), this protein is Ribosome maturation factor RimM.